We begin with the raw amino-acid sequence, 335 residues long: Transmembrane protein 120B (335 aa).

The stretch at 1-39 forms a coiled coil; it reads MSLQKCQEEWGELEKEFQQLQETHKVYKQKLEELNGLQN. 6 helical membrane-spanning segments follow: residues 100–122, 130–150, 157–177, 193–213, 268–288, and 300–320; these read GLYL…AKFA, FKLY…FVLH, VFNF…SILI, VSTF…YQIF, FLLP…ITLF, and QVFV…LTTL.

Belongs to the TMEM120 family.

The protein resides in the nucleus inner membrane. Necessary for efficient adipogenesis. Does not show ion channel activity. The sequence is that of Transmembrane protein 120B (tmem120b) from Xenopus tropicalis (Western clawed frog).